A 129-amino-acid polypeptide reads, in one-letter code: Small ribosomal subunit protein uS11 (129 aa).

This sequence belongs to the universal ribosomal protein uS11 family. Part of the 30S ribosomal subunit. Interacts with proteins S7 and S18. Binds to IF-3.

In terms of biological role, located on the platform of the 30S subunit, it bridges several disparate RNA helices of the 16S rRNA. Forms part of the Shine-Dalgarno cleft in the 70S ribosome. This Pseudomonas fluorescens (strain SBW25) protein is Small ribosomal subunit protein uS11.